The sequence spans 425 residues: Histidine--tRNA ligase (425 aa).

Belongs to the class-II aminoacyl-tRNA synthetase family. In terms of assembly, homodimer.

Its subcellular location is the cytoplasm. The catalysed reaction is tRNA(His) + L-histidine + ATP = L-histidyl-tRNA(His) + AMP + diphosphate + H(+). The sequence is that of Histidine--tRNA ligase from Shewanella sp. (strain ANA-3).